Here is an 84-residue protein sequence, read N- to C-terminus: Small ribosomal subunit protein bS20 (84 aa).

Residues M1 to M25 are disordered.

The protein belongs to the bacterial ribosomal protein bS20 family.

Binds directly to 16S ribosomal RNA. This is Small ribosomal subunit protein bS20 from Pediococcus pentosaceus (strain ATCC 25745 / CCUG 21536 / LMG 10740 / 183-1w).